Reading from the N-terminus, the 411-residue chain is S-inosyl-L-homocysteine hydrolase (411 aa).

Substrate-binding residues include Asp-121 and Glu-146. NAD(+) is bound at residue 147 to 149; it reads TTT. Lys-176 and Asp-180 together coordinate substrate. NAD(+)-binding positions include Asn-181, 210 to 215, Glu-233, Asn-268, 289 to 291, and Asn-335; these read GYGWCG and SGH.

It belongs to the adenosylhomocysteinase family. Requires NAD(+) as cofactor.

It localises to the cytoplasm. The catalysed reaction is S-inosyl-L-homocysteine + H2O = L-homocysteine + inosine. It functions in the pathway amino-acid biosynthesis; S-adenosyl-L-methionine biosynthesis. Its function is as follows. Catalyzes the hydrolysis of S-inosyl-L-homocysteine (SIH) to L-homocysteine (Hcy) and inosine. Likely functions in a S-adenosyl-L-methionine (SAM) recycling pathway from S-adenosyl-L-homocysteine (SAH) produced from SAM-dependent methylation reactions. Can also catalyze the reverse reaction in vitro, i.e. the synthesis of SIH from Hcy and inosine. The chain is S-inosyl-L-homocysteine hydrolase from Methanosarcina mazei (strain ATCC BAA-159 / DSM 3647 / Goe1 / Go1 / JCM 11833 / OCM 88) (Methanosarcina frisia).